The primary structure comprises 587 residues: Chaperonin GroEL 1 (587 aa).

ATP contacts are provided by residues 29–32 (TIGP), 86–90 (DGTTT), Gly413, and Asp492.

It belongs to the chaperonin (HSP60) family. In terms of assembly, forms a cylinder of 14 subunits composed of two heptameric rings stacked back-to-back. Interacts with the co-chaperonin GroES.

It localises to the cytoplasm. The enzyme catalyses ATP + H2O + a folded polypeptide = ADP + phosphate + an unfolded polypeptide.. Functionally, together with its co-chaperonin GroES, plays an essential role in assisting protein folding. The GroEL-GroES system forms a nano-cage that allows encapsulation of the non-native substrate proteins and provides a physical environment optimized to promote and accelerate protein folding. In Prochlorococcus marinus (strain MIT 9515), this protein is Chaperonin GroEL 1.